A 625-amino-acid polypeptide reads, in one-letter code: Glyco-Gag protein (625 aa).

Topologically, residues 1–66 (LGDVSEASGA…SVFRRNRAAR (66 aa)) are cytoplasmic. The chain crosses the membrane as a helical span at residues 67 to 86 (LVCLSIVLSFVCSLLFWTAS). Topologically, residues 87 to 625 (KNMGQTVTTP…PQTSLLTLDD (539 aa)) are extracellular. N-linked (GlcNAc...) asparagine; by host glycosylation occurs at Asn113. The segment at 195–305 (PSPTAPILPS…STTSRAFPLR (111 aa)) is disordered. N-linked (GlcNAc...) asparagine; by host glycosylation is present at Asn479. Composition is skewed to basic and acidic residues over residues 522-553 (ETPE…EKER) and 573-606 (RQDR…DCPK). Positions 522-625 (ETPEEREERV…PQTSLLTLDD (104 aa)) are disordered.

Glycosylated by host. Post-translationally, cleaved by host near the middle of the molecule, releasing the c-terminal half containing capsid and nucleoprotein domains op GAG.

Its subcellular location is the host cell membrane. In terms of biological role, plays a role in viral particle release. Presumably acts by facilitating the fission of the virion bud at the cell surface. May prevent the antiviral activity of murine APOBEC3. This chain is Glyco-Gag protein, found in AKV murine leukemia virus (AKR (endogenous) murine leukemia virus).